The sequence spans 508 residues: MFSLQDLCRKNLFTPLEPLGKHVVQRLGLYWEGHGSLKRMGHCFVCVDQIHILSINLAIKIAAAEGNEEIVKLLLLWGGNLHYAIIGALESRQYELILIYENQIGDWHDILSLIRDPVIYERCHELNVTCTFQCLFQHAIRHNMVSILQKYREDLANNRRMIQLLYEMACRLQNYDIITWIARNWHVFNIEAIFSIAFIRKDLTLYSLGYMFLLDRMSIEDRNFKSIITRHLEYAAKKGLFDFVLESLKYGGQVDTVLFQAVKYNHRKILAYFIHETPRKTVEKLLLHAVESRASKKTMNLLLSSLNYSIHSIIKKLLYAVVKHKYMLVIKLLLERPKKKINLVDAVLYRLVKHSTNAEIVKFMNEFSVSPERVIKVAARLMRVDLIKNISKDVWENKLERIKHLKQIVYTMKHRNGKNLLMYNIYNITGYTYMNIKEAFNLTKFYAVHNATCLFKEMCKNCFVHDLIQLRELLEDCLHIANKHAYIQIAEAANEYIKYIDDIYISLK.

ANK repeat units lie at residues 54–83 (SINLAIKIAAAEGNEEIVKLLLLWGGNLHY), 253–282 (QVDTVLFQAVKYNHRKILAYFIHETPRKTV), and 313–343 (IIKKLLYAVVKHKYMLVIKLLLERPKKKINL).

Belongs to the asfivirus MGF 505 family.

Functionally, plays a role in virus cell tropism, and may be required for efficient virus replication in macrophages. This chain is Protein MGF 505-9R, found in Ornithodoros (relapsing fever ticks).